Consider the following 121-residue polypeptide: uncharacterized protein (121 aa).

2 helical membrane passes run 16 to 36 (GFMV…GFAV) and 74 to 94 (LYIA…MKTI).

Its subcellular location is the cell membrane. This is an uncharacterized protein from Bacillus subtilis (strain 168).